We begin with the raw amino-acid sequence, 543 residues long: Zinc finger CCHC domain-containing protein 7 (543 aa).

Residues 51-71 form a disordered region; the sequence is EEEHEEKNSGNSESSSSKPNQ. Positions 59-68 are enriched in low complexity; that stretch reads SGNSESSSSK. Residues Lys-131, Lys-139, Lys-141, Lys-239, and Lys-254 each participate in a glycyl lysine isopeptide (Lys-Gly) (interchain with G-Cter in SUMO2) cross-link. 3 CCHC-type zinc fingers span residues 241–258, 263–280, and 304–321; these read IICRNCDKRGHLSKNCPL, RRCFLCSRRGHLLYSCPA, and KQCDRCHMLGHYTDACTE. Residue Lys-339 forms a Glycyl lysine isopeptide (Lys-Gly) (interchain with G-Cter in SUMO2) linkage. A CCHC-type 4 zinc finger spans residues 348-365; the sequence is AYCYHCAQKGHYGHECPE. Glycyl lysine isopeptide (Lys-Gly) (interchain with G-Cter in SUMO2) cross-links involve residues Lys-412, Lys-417, and Lys-435. The segment at 414 to 543 is disordered; that stretch reads PYIKAANENP…FLIKQRKKKS (130 aa). 2 stretches are compositionally biased toward basic and acidic residues: residues 441-457 and 465-475; these read QENKETQKEMKNKNRNW and RHREVDEDFPR. Residue Lys-478 forms a Glycyl lysine isopeptide (Lys-Gly) (interchain with G-Cter in SUMO2) linkage. Over residues 479 to 491 the composition is skewed to polar residues; it reads TYSSPGSFKTQKP. Residues Ser-482 and Ser-485 each carry the phosphoserine modification. Glycyl lysine isopeptide (Lys-Gly) (interchain with G-Cter in SUMO2) cross-links involve residues Lys-487, Lys-490, and Lys-493. Basic residues predominate over residues 493–502; it reads KPFHRSSHYH. The segment covering 503 to 515 has biased composition (basic and acidic residues); the sequence is TSREDKSPKEGKR. Lys-537 participates in a covalent cross-link: Glycyl lysine isopeptide (Lys-Gly) (interchain with G-Cter in SUMO2).

Component of a nucleolar TRAMP-like complex, an ATP-dependent exosome regulatory complex consisting of a helicase (MTREX), an oligadenylate polymerase (TENT4B or TENT4A), and a substrate specific RNA-binding factor (ZCCHC7 or ZCCHC8). Several TRAMP-like complexes exist with specific compositions and are associated with nuclear, or nucleolar RNA exosomes.

Its subcellular location is the nucleus. It is found in the nucleolus. This Homo sapiens (Human) protein is Zinc finger CCHC domain-containing protein 7 (ZCCHC7).